The primary structure comprises 419 residues: 2-amino-3-ketobutyrate coenzyme A ligase, mitochondrial (419 aa).

Residues 1 to 21 constitute a mitochondrion transit peptide; sequence MWAGRVLHAALSRAPRESRAQ. At Lys-45 the chain carries N6-acetyllysine; alternate. At Lys-45 the chain carries N6-succinyllysine; alternate. Pyridoxal 5'-phosphate is bound at residue 134–135; sequence CF. Position 159 (His-159) interacts with substrate. Lys-187 carries the post-translational modification N6-acetyllysine; alternate. Lys-187 is modified (N6-succinyllysine; alternate). Residues Ser-206, 231–234, 262–265, and 295–296 contribute to the pyridoxal 5'-phosphate site; these read DESH, TLGK, and SN. Lys-265 carries the N6-(pyridoxal phosphate)lysine modification. N6-succinyllysine is present on residues Lys-326 and Lys-368. Residue Lys-383 is modified to N6-acetyllysine; alternate. The residue at position 383 (Lys-383) is an N6-succinyllysine; alternate. A substrate-binding site is contributed by Arg-389.

The protein belongs to the class-II pyridoxal-phosphate-dependent aminotransferase family. The cofactor is pyridoxal 5'-phosphate.

Its subcellular location is the mitochondrion. The protein resides in the nucleus. The enzyme catalyses glycine + acetyl-CoA = (2S)-2-amino-3-oxobutanoate + CoA. It functions in the pathway amino-acid degradation; L-threonine degradation via oxydo-reductase pathway; glycine from L-threonine: step 2/2. Functionally, pyridoxal phosphate (PLP) dependent enzyme, which catalyzes the cleavage of 2-amino-3-oxobutanoate to glycine and acetyl-CoA. Catalyzes the second reaction step on the main metabolic degradation pathway for L-threonine. This is 2-amino-3-ketobutyrate coenzyme A ligase, mitochondrial (GCAT) from Bos taurus (Bovine).